Here is a 150-residue protein sequence, read N- to C-terminus: uncharacterized protein (150 aa).

This is an uncharacterized protein from Bacillus subtilis (strain 168).